The primary structure comprises 128 residues: 2-iminobutanoate/2-iminopropanoate deaminase (128 aa).

Arginine 105 serves as a coordination point for substrate.

Belongs to the RutC family. Homotrimer.

The protein localises to the cytoplasm. The enzyme catalyses 2-iminobutanoate + H2O = 2-oxobutanoate + NH4(+). It catalyses the reaction 2-iminopropanoate + H2O = pyruvate + NH4(+). It participates in amino-acid biosynthesis; L-isoleucine biosynthesis; 2-oxobutanoate from L-threonine. In terms of biological role, accelerates the release of ammonia from reactive enamine/imine intermediates of the PLP-dependent threonine dehydratase (IlvA) in the low water environment of the cell. It catalyzes the deamination of enamine/imine intermediates to yield 2-ketobutyrate and ammonia. It is required for the detoxification of reactive intermediates of IlvA due to their highly nucleophilic abilities and to avoid they are captured by anthranilate phosphoribosyltransferase (TrpD) to generate PRA, an intermediate in the alternative pyrimidine biosynthetic (APB) pathway. Also required for full activity of IlvE which is involved in the isoleucine biosynthesis. RidA also accelerates the release of pyruvate produced by IlvA from L-serine. The chain is 2-iminobutanoate/2-iminopropanoate deaminase from Salmonella typhimurium (strain LT2 / SGSC1412 / ATCC 700720).